The primary structure comprises 553 residues: Probable cytochrome P450 301a1, mitochondrial (553 aa).

A heme-binding site is contributed by Cys-502.

It belongs to the cytochrome P450 family. It depends on heme as a cofactor.

The protein resides in the mitochondrion membrane. The sequence is that of Probable cytochrome P450 301a1, mitochondrial (Cyp301a1) from Drosophila melanogaster (Fruit fly).